The primary structure comprises 475 residues: Protein nucleotidyltransferase YdiU (475 aa).

8 residues coordinate ATP: Gly-82, Gly-84, Arg-85, Lys-105, Asp-117, Gly-118, Arg-168, and Arg-175. The active-site Proton acceptor is the Asp-240. Mg(2+) contacts are provided by Asn-241 and Asp-250. Asp-250 is an ATP binding site.

It belongs to the SELO family. Mg(2+) serves as cofactor. Requires Mn(2+) as cofactor.

It catalyses the reaction L-seryl-[protein] + ATP = 3-O-(5'-adenylyl)-L-seryl-[protein] + diphosphate. It carries out the reaction L-threonyl-[protein] + ATP = 3-O-(5'-adenylyl)-L-threonyl-[protein] + diphosphate. The enzyme catalyses L-tyrosyl-[protein] + ATP = O-(5'-adenylyl)-L-tyrosyl-[protein] + diphosphate. The catalysed reaction is L-histidyl-[protein] + UTP = N(tele)-(5'-uridylyl)-L-histidyl-[protein] + diphosphate. It catalyses the reaction L-seryl-[protein] + UTP = O-(5'-uridylyl)-L-seryl-[protein] + diphosphate. It carries out the reaction L-tyrosyl-[protein] + UTP = O-(5'-uridylyl)-L-tyrosyl-[protein] + diphosphate. Functionally, nucleotidyltransferase involved in the post-translational modification of proteins. It can catalyze the addition of adenosine monophosphate (AMP) or uridine monophosphate (UMP) to a protein, resulting in modifications known as AMPylation and UMPylation. The polypeptide is Protein nucleotidyltransferase YdiU (Aeromonas hydrophila subsp. hydrophila (strain ATCC 7966 / DSM 30187 / BCRC 13018 / CCUG 14551 / JCM 1027 / KCTC 2358 / NCIMB 9240 / NCTC 8049)).